A 331-amino-acid chain; its full sequence is Biotin synthase (331 aa).

Residues 43–267 (NTVQVSTLLS…LMPASYVRLS (225 aa)) form the Radical SAM core domain. [4Fe-4S] cluster contacts are provided by Cys58, Cys62, and Cys65. [2Fe-2S] cluster contacts are provided by Cys102, Cys133, Cys193, and Arg265.

This sequence belongs to the radical SAM superfamily. Biotin synthase family. Homodimer. Requires [4Fe-4S] cluster as cofactor. [2Fe-2S] cluster is required as a cofactor.

It carries out the reaction (4R,5S)-dethiobiotin + (sulfur carrier)-SH + 2 reduced [2Fe-2S]-[ferredoxin] + 2 S-adenosyl-L-methionine = (sulfur carrier)-H + biotin + 2 5'-deoxyadenosine + 2 L-methionine + 2 oxidized [2Fe-2S]-[ferredoxin]. It participates in cofactor biosynthesis; biotin biosynthesis; biotin from 7,8-diaminononanoate: step 2/2. Its function is as follows. Catalyzes the conversion of dethiobiotin (DTB) to biotin by the insertion of a sulfur atom into dethiobiotin via a radical-based mechanism. The chain is Biotin synthase from Alkalilimnicola ehrlichii (strain ATCC BAA-1101 / DSM 17681 / MLHE-1).